The chain runs to 122 residues: Dihydroneopterin aldolase (122 aa).

Substrate is bound by residues Glu-21, Tyr-53, and 72 to 73; that span reads VE. The active-site Proton donor/acceptor is the Lys-98.

This sequence belongs to the DHNA family. Homooctamer.

The enzyme catalyses 7,8-dihydroneopterin = 6-hydroxymethyl-7,8-dihydropterin + glycolaldehyde. It catalyses the reaction 7,8-dihydroneopterin = 7,8-dihydromonapterin. It functions in the pathway cofactor biosynthesis; tetrahydrofolate biosynthesis; 2-amino-4-hydroxy-6-hydroxymethyl-7,8-dihydropteridine diphosphate from 7,8-dihydroneopterin triphosphate: step 3/4. Catalyzes the conversion of 7,8-dihydroneopterin to 6-hydroxymethyl-7,8-dihydropterin. Can use L-threo-dihydroneopterin and D-erythro-dihydroneopterin as substrates for the formation of 6-hydroxymethyldihydropterin, but it can also catalyze the epimerization of carbon 2' of dihydroneopterin to dihydromonapterin at appreciable velocity. In Escherichia coli O6:H1 (strain CFT073 / ATCC 700928 / UPEC), this protein is Dihydroneopterin aldolase (folB).